The following is a 303-amino-acid chain: Putative S-adenosyl-L-methionine-dependent methyltransferase ML2020 (303 aa).

S-adenosyl-L-methionine contacts are provided by residues D130 and 159–160; that span reads DL.

This sequence belongs to the UPF0677 family.

Functionally, exhibits S-adenosyl-L-methionine-dependent methyltransferase activity. This chain is Putative S-adenosyl-L-methionine-dependent methyltransferase ML2020, found in Mycobacterium leprae (strain TN).